Reading from the N-terminus, the 89-residue chain is Large ribosomal subunit protein bL27 (89 aa).

This sequence belongs to the bacterial ribosomal protein bL27 family.

This chain is Large ribosomal subunit protein bL27, found in Synechococcus sp. (strain JA-3-3Ab) (Cyanobacteria bacterium Yellowstone A-Prime).